Here is a 680-residue protein sequence, read N- to C-terminus: DNA ligase (680 aa).

32–36 lines the NAD(+) pocket; sequence DTVYD. Residues 47–66 are disordered; sequence QNDPGLQRPDSPTQRVGGAP. Residues 81–82 and Glu115 each bind NAD(+); that span reads SL. Lys117 acts as the N6-AMP-lysine intermediate in catalysis. Positions 138, 175, 291, and 315 each coordinate NAD(+). Zn(2+)-binding residues include Cys409, Cys412, Cys427, and Cys432. The region spanning 602-680 is the BRCT domain; that stretch reads DADGVLQGKT…EADLTALLQP (79 aa).

Belongs to the NAD-dependent DNA ligase family. LigA subfamily. The cofactor is Mg(2+). Requires Mn(2+) as cofactor.

It catalyses the reaction NAD(+) + (deoxyribonucleotide)n-3'-hydroxyl + 5'-phospho-(deoxyribonucleotide)m = (deoxyribonucleotide)n+m + AMP + beta-nicotinamide D-nucleotide.. Functionally, DNA ligase that catalyzes the formation of phosphodiester linkages between 5'-phosphoryl and 3'-hydroxyl groups in double-stranded DNA using NAD as a coenzyme and as the energy source for the reaction. It is essential for DNA replication and repair of damaged DNA. This is DNA ligase from Synechococcus sp. (strain CC9605).